Consider the following 506-residue polypeptide: Cysteine--tRNA ligase (506 aa).

Cys-43 is a Zn(2+) binding site. The 'HIGH' region motif lies at 45-55; that stretch reads VTVYDLCHLGH. Cys-237, His-262, and Glu-266 together coordinate Zn(2+). Positions 294-298 match the 'KMSKS' region motif; that stretch reads KMSKS. ATP is bound at residue Lys-297.

The protein belongs to the class-I aminoacyl-tRNA synthetase family. As to quaternary structure, monomer. Zn(2+) serves as cofactor.

It is found in the cytoplasm. It catalyses the reaction tRNA(Cys) + L-cysteine + ATP = L-cysteinyl-tRNA(Cys) + AMP + diphosphate. The chain is Cysteine--tRNA ligase from Synechococcus sp. (strain JA-3-3Ab) (Cyanobacteria bacterium Yellowstone A-Prime).